Here is a 226-residue protein sequence, read N- to C-terminus: dITP/XTP pyrophosphatase (226 aa).

14-19 (TGNKDK) provides a ligand contact to substrate. Residues glutamate 49 and aspartate 83 each coordinate Mg(2+). The active-site Proton acceptor is the aspartate 83. Substrate is bound by residues threonine 84, 176–179 (FGYD), lysine 199, and 204–205 (HR).

This sequence belongs to the HAM1 NTPase family. As to quaternary structure, homodimer. Requires Mg(2+) as cofactor.

The enzyme catalyses XTP + H2O = XMP + diphosphate + H(+). It catalyses the reaction dITP + H2O = dIMP + diphosphate + H(+). It carries out the reaction ITP + H2O = IMP + diphosphate + H(+). Functionally, pyrophosphatase that catalyzes the hydrolysis of nucleoside triphosphates to their monophosphate derivatives, with a high preference for the non-canonical purine nucleotides XTP (xanthosine triphosphate), dITP (deoxyinosine triphosphate) and ITP. Seems to function as a house-cleaning enzyme that removes non-canonical purine nucleotides from the nucleotide pool, thus preventing their incorporation into DNA/RNA and avoiding chromosomal lesions. This Chlorobaculum tepidum (strain ATCC 49652 / DSM 12025 / NBRC 103806 / TLS) (Chlorobium tepidum) protein is dITP/XTP pyrophosphatase.